A 191-amino-acid polypeptide reads, in one-letter code: Protein YceI (191 aa).

The first 22 residues, 1–22, serve as a signal peptide directing secretion; sequence MKKNLLGFTFASLLFTTGSAVA.

Belongs to the UPF0312 family. Type 1 subfamily.

It localises to the periplasm. The sequence is that of Protein YceI from Salmonella agona (strain SL483).